A 20-amino-acid polypeptide reads, in one-letter code: Pregnancy-associated glycoprotein 75 (20 aa).

Belongs to the peptidase A1 family. Post-translationally, N-glycosylated. In terms of tissue distribution, expressed in chorionic epithelium (trophectoderm).

It is found in the secreted. This Bubalus bubalis (Domestic water buffalo) protein is Pregnancy-associated glycoprotein 75.